The primary structure comprises 534 residues: Kelch repeat and BTB domain-containing protein 4 (534 aa).

Residues 61 to 128 enclose the BTB domain; that stretch reads ADVTISVEGR…IYHGTVKLRA (68 aa). Positions 163 to 255 constitute a BACK domain; the sequence is CLQVMWLADR…SLKEIGENVH (93 aa). Kelch repeat units follow at residues 255–301, 302–344, 347–394, 396–446, and 448–497; these read HIYL…KHGG, DLYV…SVPG, AIYS…NLNG, IYLL…VHKD, and VFIV…VFRD.

In terms of assembly, component of the BCR(KBTBD4) E3 ubiquitin ligase complex, at least composed of CUL3, KBTBD4 and RBX1.

In terms of biological role, substrate-specific adapter of a BCR (BTB-CUL3-RBX1) E3 ubiquitin ligase complex which targets CoREST corepressor complex components RCOR1, KDM1A/LSD1 and HDAC2 for proteasomal degradation. RCOR1 is likely to be the primary target while degradation of KDM1A and HDAC2 is likely due to their association with RCOR1. Also targets RCOR3, MIER2 and MIER3 for proteasomal degradation as well as associated proteins ZNF217 and RREB1. Degradation is dependent on the presence of an ELM2 domain in the target proteins. In Mus musculus (Mouse), this protein is Kelch repeat and BTB domain-containing protein 4 (Kbtbd4).